A 179-amino-acid chain; its full sequence is MAATEPILAATGSPAAVPPEKLEGAGSSSAPERNCVGSSLPEASPPAPEPSSPNAAVPEAIPTPRAAASAALELPLGPAPVSVAPQAEAEARSTPGPAGSRLGPETFRQRFRQFRYQDAAGPREAFRQLRELSRQWLRPDIRTKEQIVEMLVQEQLLAILPEAARARRIRRRTDVRITG.

Residues 1-104 (MAATEPILAA…PGPAGSRLGP (104 aa)) form a disordered region. Positions 52 to 80 (SPNAAVPEAIPTPRAAASAALELPLGPAP) are enriched in low complexity. Positions 108–166 (RQRFRQFRYQDAAGPREAFRQLRELSRQWLRPDIRTKEQIVEMLVQEQLLAILPEAARA) constitute an SCAN box domain.

In terms of assembly, interacts with ZNF202.

It is found in the nucleus. May regulate transcriptional activity. In Homo sapiens (Human), this protein is SCAN domain-containing protein 1 (SCAND1).